The primary structure comprises 498 residues: Dynein regulatory complex subunit 5 (498 aa).

2 disordered regions span residues 27-52 (ALGS…LKTK) and 200-223 (MPTP…EPEK). The span at 28–47 (LGSSSTGPTSLKTSSTPTPG) shows a compositional bias: low complexity. LRR repeat units lie at residues 276–299 (CHTL…ILIR), 306–327 (ALEE…AAAK), 333–353 (RLRV…QSLA), 361–382 (NLVF…AIAH), 389–409 (CLSV…TLLS), and 417–438 (TLVS…QLLE).

This sequence belongs to the DRC5 family. Component of the nexin-dynein regulatory complex (N-DRC). Interacts with DRC1. Interacts with FBXL13/DRC6, DRC3 and DRC7. Testis-specific (at protein level).

It is found in the cell projection. Its subcellular location is the cilium. It localises to the flagellum. The protein localises to the cytoplasm. The protein resides in the cytoskeleton. It is found in the flagellum axoneme. In terms of biological role, component of the nexin-dynein regulatory complex (N-DRC) a key regulator of ciliary/flagellar motility which maintains the alignment and integrity of the distal axoneme and regulates microtubule sliding in motile axonemes. May play a role in the assembly of N-DRC. Required for sperm motility. This chain is Dynein regulatory complex subunit 5 (Tcte1), found in Mus musculus (Mouse).